The sequence spans 235 residues: Lipoprotein signal peptidase (235 aa).

The disordered stretch occupies residues 1–23 (MTDETSGPAEPVTDAPGDAESPA). The next 3 membrane-spanning stretches (helical) occupy residues 31 to 51 (LLLT…VLAV), 84 to 104 (GYTW…IWMG), and 108 to 128 (VSPW…GNLV). Active-site residues include D144 and D158. Residues 156–176 (VADPSVVGGAILLVALSLFGF) form a helical membrane-spanning segment. The segment at 185 to 235 (RPGEDAEPSAGASDSTPEAPAADGPDKPAGPVGPEDAAEESKTVGHQAEPS) is disordered. Low complexity predominate over residues 201–218 (PEAPAADGPDKPAGPVGP).

This sequence belongs to the peptidase A8 family.

It localises to the cell membrane. It catalyses the reaction Release of signal peptides from bacterial membrane prolipoproteins. Hydrolyzes -Xaa-Yaa-Zaa-|-(S,diacylglyceryl)Cys-, in which Xaa is hydrophobic (preferably Leu), and Yaa (Ala or Ser) and Zaa (Gly or Ala) have small, neutral side chains.. Its pathway is protein modification; lipoprotein biosynthesis (signal peptide cleavage). Its function is as follows. This protein specifically catalyzes the removal of signal peptides from prolipoproteins. The polypeptide is Lipoprotein signal peptidase (Mycolicibacterium smegmatis (strain ATCC 700084 / mc(2)155) (Mycobacterium smegmatis)).